A 768-amino-acid polypeptide reads, in one-letter code: Calcium up-regulated protein G (768 aa).

The tract at residues 1 to 22 (MINIEDISKSSNQSEEKQLKST) is disordered. Ricin B-type lectin domains are found at residues 1–107 (MINI…WTID) and 100–248 (KTQI…WGIN).

This sequence belongs to the cup family.

It is found in the cytoplasm. Its subcellular location is the membrane. In terms of biological role, may play an important role in stabilizing and/or regulating the cell membrane during Ca(2+) stress or certain stages of development. The chain is Calcium up-regulated protein G (cupG) from Dictyostelium discoideum (Social amoeba).